Here is a 182-residue protein sequence, read N- to C-terminus: Ribosome-recycling factor (182 aa).

Belongs to the RRF family.

Its subcellular location is the cytoplasm. Functionally, responsible for the release of ribosomes from messenger RNA at the termination of protein biosynthesis. May increase the efficiency of translation by recycling ribosomes from one round of translation to another. This is Ribosome-recycling factor from Prochlorococcus marinus (strain SARG / CCMP1375 / SS120).